The sequence spans 362 residues: Phosphoserine aminotransferase (362 aa).

L-glutamate contacts are provided by serine 9 and arginine 42. Pyridoxal 5'-phosphate is bound by residues 76–77 (GR), tryptophan 102, threonine 153, aspartate 174, and glutamine 197. Lysine 198 is modified (N6-(pyridoxal phosphate)lysine). Residue 239–240 (NT) coordinates pyridoxal 5'-phosphate.

This sequence belongs to the class-V pyridoxal-phosphate-dependent aminotransferase family. SerC subfamily. In terms of assembly, homodimer. Requires pyridoxal 5'-phosphate as cofactor.

The protein localises to the cytoplasm. The enzyme catalyses O-phospho-L-serine + 2-oxoglutarate = 3-phosphooxypyruvate + L-glutamate. The catalysed reaction is 4-(phosphooxy)-L-threonine + 2-oxoglutarate = (R)-3-hydroxy-2-oxo-4-phosphooxybutanoate + L-glutamate. It participates in amino-acid biosynthesis; L-serine biosynthesis; L-serine from 3-phospho-D-glycerate: step 2/3. Its pathway is cofactor biosynthesis; pyridoxine 5'-phosphate biosynthesis; pyridoxine 5'-phosphate from D-erythrose 4-phosphate: step 3/5. Functionally, catalyzes the reversible conversion of 3-phosphohydroxypyruvate to phosphoserine and of 3-hydroxy-2-oxo-4-phosphonooxybutanoate to phosphohydroxythreonine. In Escherichia coli O17:K52:H18 (strain UMN026 / ExPEC), this protein is Phosphoserine aminotransferase.